Here is a 1559-residue protein sequence, read N- to C-terminus: Bile pigment transporter 1 (1559 aa).

Topologically, residues 1 to 29 (MSSLEVVDGCPYGYRPYPDSGTNALNPCF) are vacuolar. The helical transmembrane segment at 30–50 (ISVISAWQAVFFLLIGSYQLW) threads the bilayer. Residues 51 to 84 (KLYKNNKVPPRFKNFPTLPSKINSRHLTHLTNVC) lie on the Cytoplasmic side of the membrane. The chain crosses the membrane as a helical span at residues 85-105 (FQSTLIICELALVSQSSDRVY). Residues 106-110 (PFILK) are Vacuolar-facing. Residues 111-127 (KALYLNLLFNLGISLPT) traverse the membrane as a helical segment. Residues 128 to 139 (QYLAYFKSTFSM) lie on the Cytoplasmic side of the membrane. Residues 140–160 (GNQLFYYMFQILLQLFLILQR) form a helical membrane-spanning segment. Over 161–178 (YYHGSSNERLTVISGQTA) the chain is Vacuolar. Residues 179 to 199 (MILEVLLLFNSVAIFIYDLCI) form a helical membrane-spanning segment. Residues 200-283 (FEPINELSEY…WLNRNSLWRA (84 aa)) lie on the Cytoplasmic side of the membrane. The helical transmembrane segment at 284–304 (IWKSFGRTISVAMLYETTSDL) threads the bilayer. The region spanning 292-578 (ISVAMLYETT…VPSMINTIIE (287 aa)) is the ABC transmembrane type-1 1 domain. At 305-333 (LSVVQPQFLRIFIDGLNPETSSKYPPLNG) the chain is on the vacuolar side. A helical membrane pass occupies residues 334 to 354 (VFIALTLFVISVVSVFLTNQF). Topologically, residues 355-410 (YIGIFEAGLGIRGSLASLVYQKSLRLTLAERNEKSTGDILNLMSVDVLRIQRFFEN) are cytoplasmic. A helical membrane pass occupies residues 411 to 431 (AQTIIGAPIQIIVVLTSLYWL). Topologically, residues 432–434 (LGK) are vacuolar. A helical transmembrane segment spans residues 435-455 (AVIGGLVTMAIMMPINAFLSR). The Cytoplasmic portion of the chain corresponds to 456–518 (KVKKLSKTQM…NFRKIGIVSN (63 aa)). The helical transmembrane segment at 519–539 (LIYFAWNCVPLMVTCSTFGLF) threads the bilayer. At 540 to 560 (SLFSDSPLSPAIVFPSLSLFN) the chain is on the vacuolar side. The chain crosses the membrane as a helical span at residues 561–581 (ILNSAIYSVPSMINTIIETSV). Topologically, residues 582–972 (SMERLKSFLL…VKTKIYLAYI (391 aa)) are cytoplasmic. The ABC transporter 1 domain maps to 639–871 (LRTDEESIIG…KNNTSKLKKL (233 aa)). Residue Ser-645 is modified to Phosphoserine. 672 to 679 (GRVGAGKS) provides a ligand contact to ATP. The segment at 877–899 (SPIDNGNESDVQTEHRSESEVDE) is disordered. Ser-885 bears the Phosphoserine mark. Phosphothreonine is present on Thr-889. Phosphoserine occurs at positions 893 and 895. Thr-916 bears the Phosphothreonine mark. 2 positions are modified to phosphoserine: Ser-927 and Ser-931. Thr-934 carries the post-translational modification Phosphothreonine. Residues 973–993 (KACGVLGVVLFFLFMILTRVF) traverse the membrane as a helical segment. The 286-residue stretch at 980-1265 (VVLFFLFMIL…IVRTTVTIET (286 aa)) folds into the ABC transmembrane type-1 2 domain. The Vacuolar portion of the chain corresponds to 994 to 1030 (DLAENFWLKYWSESNEKNGSNERVWMFVGVYSLIGVA). An N-linked (GlcNAc...) asparagine glycan is attached at Asn-1011. The chain crosses the membrane as a helical span at residues 1031-1052 (SAAFNNLRSIMMLLYCSIRGSK). Residues 1053–1095 (KLHESMAKSVIRSPMTFFETTPVGRIINRFSSDMDAVDSNLQY) are Cytoplasmic-facing. The chain crosses the membrane as a helical span at residues 1096–1116 (IFSFFFKSILTYLVTVILVGY). A topological domain (vacuolar) is located at residue Asn-1117. The helical transmembrane segment at 1118 to 1138 (MPWFLVFNMFLVVIYIYYQTF) threads the bilayer. Over 1139–1209 (YIVLSRELKR…STNRWLSVRL (71 aa)) the chain is Cytoplasmic. A helical membrane pass occupies residues 1210–1230 (QTIGATIVLATAILALATMNT). At 1231-1235 (KRQLS) the chain is on the vacuolar side. Residues 1236 to 1256 (SGMVGLLMSYSLEVTGSLTWI) traverse the membrane as a helical segment. Topologically, residues 1257–1559 (VRTTVTIETN…SLCEKGGYLK (303 aa)) are cytoplasmic. The ABC transporter 2 domain occupies 1302 to 1553 (IEFKNYSTKY…KTSIFYSLCE (252 aa)). 1336 to 1343 (GRTGAGKS) serves as a coordination point for ATP. A compositionally biased stretch (basic and acidic residues) spans 1420 to 1433 (HLEKMLHSKPRGDD). Residues 1420–1439 (HLEKMLHSKPRGDDSNEEDG) are disordered.

This sequence belongs to the ABC transporter superfamily.

It is found in the vacuole membrane. Functionally, cooperates for the ATP-dependent vacuolar transport of bilirubin and glutathione conjugates. This Saccharomyces cerevisiae (strain ATCC 204508 / S288c) (Baker's yeast) protein is Bile pigment transporter 1 (BPT1).